The primary structure comprises 1087 residues: Platelet-derived growth factor receptor alpha (1087 aa).

An N-terminal signal peptide occupies residues 1–23 (MGTPPRTFLILGCFLTGPLLTLC). The Extracellular segment spans residues 24 to 528 (QLPLPTIVPN…PTLRSELTVA (505 aa)). Ig-like C2-type domains lie at 26–104 (PLPT…YNHT), 116–208 (IYIY…IYIL), 213–312 (QLPV…VHDK), 314–411 (FIHL…SLLI), and 414–517 (PALI…LKLV). Asn44, Asn75, Asn88, and Asn102 each carry an N-linked (GlcNAc...) asparagine glycan. A disulfide bridge connects residues Cys49 and Cys99. Disulfide bonds link Cys149–Cys189 and Cys235–Cys290. Residues Asn353, Asn359, Asn458, and Asn468 are each glycosylated (N-linked (GlcNAc...) asparagine). Cys435 and Cys501 are disulfide-bonded. The chain crosses the membrane as a helical span at residues 529-549 (AAVLVLLVIVIISLIVLVIIW). Residues 550 to 1087 (KQKPRYEIRW…SSDLVEDSFL (538 aa)) are Cytoplasmic-facing. Phosphotyrosine; by autocatalysis is present on residues Tyr572 and Tyr574. The Protein kinase domain maps to 593 to 954 (LVLGRILGSG…HLSEIVESLL (362 aa)). Residues 599–607 (LGSGAFGKV) and Lys627 contribute to the ATP site. 6 positions are modified to phosphotyrosine; by autocatalysis: Tyr720, Tyr731, Tyr742, Tyr754, Tyr762, and Tyr768. The Proton acceptor role is filled by Asp818. 2 positions are modified to phosphotyrosine; by autocatalysis: Tyr849 and Tyr988. Positions 1000–1011 (KDRESGFDEQRL) are enriched in basic and acidic residues. The interval 1000-1059 (KDRESGFDEQRLSADSGYITPLPDIDPVSEDELGKRNRHSSQTSEESAIETGSSSSTFIK) is disordered. Tyr1017 carries the phosphotyrosine; by autocatalysis modification. Polar residues predominate over residues 1039–1057 (SSQTSEESAIETGSSSSTF).

Belongs to the protein kinase superfamily. Tyr protein kinase family. CSF-1/PDGF receptor subfamily. In terms of assembly, interacts with homodimeric PDGFA, PDGFB and PDGFC, and with heterodimers formed by PDGFA and PDGFB. Monomer in the absence of bound ligand. Interaction with dimeric PDGFA, PDGFB and/or PDGFC leads to receptor dimerization, where both PDGFRA homodimers and heterodimers with PDGFRB are observed. Ubiquitinated, leading to its internalization and degradation. In terms of processing, autophosphorylated on tyrosine residues upon ligand binding. Autophosphorylation occurs in trans, i.e. one subunit of the dimeric receptor phosphorylates tyrosine residues on the other subunit.

It localises to the cell membrane. Its subcellular location is the cell projection. The protein localises to the cilium. It is found in the golgi apparatus. The enzyme catalyses L-tyrosyl-[protein] + ATP = O-phospho-L-tyrosyl-[protein] + ADP + H(+). Its activity is regulated as follows. Present in an inactive conformation in the absence of bound ligand. Binding of PDGFA and/or PDGFB leads to dimerization and activation by autophosphorylation on tyrosine residues. Functionally, tyrosine-protein kinase that acts as a cell-surface receptor for PDGFA, PDGFB and PDGFC and plays an essential role in the regulation of embryonic development, cell proliferation, survival and chemotaxis. Depending on the context, promotes or inhibits cell proliferation and cell migration. Plays an important role in the differentiation of bone marrow-derived mesenchymal stem cells. Required for normal skeleton development. Required for normal development of the gastrointestinal tract. Plays a role in cell migration and chemotaxis in wound healing. Plays a role in platelet activation, secretion of agonists from platelet granules, and in thrombin-induced platelet aggregation. Binding of its cognate ligands - homodimeric PDGFA, homodimeric PDGFB, heterodimers formed by PDGFA and PDGFB or homodimeric PDGFC -leads to the activation of several signaling cascades; the response depends on the nature of the bound ligand and is modulated by the formation of heterodimers between PDGFRA and PDGFRB. Phosphorylates PIK3R1, PLCG1, and PTPN11. Activation of PLCG1 leads to the production of the cellular signaling molecules diacylglycerol and inositol 1,4,5-trisphosphate, mobilization of cytosolic Ca(2+) and the activation of protein kinase C. Phosphorylates PIK3R1, the regulatory subunit of phosphatidylinositol 3-kinase, and thereby mediates activation of the AKT1 signaling pathway. Mediates activation of HRAS and of the MAP kinases MAPK1/ERK2 and/or MAPK3/ERK1. Promotes activation of STAT family members STAT1, STAT3 and STAT5A and/or STAT5B. Receptor signaling is down-regulated by protein phosphatases that dephosphorylate the receptor and its down-stream effectors, and by rapid internalization of the activated receptor. The chain is Platelet-derived growth factor receptor alpha (PDGFRA) from Gallus gallus (Chicken).